The primary structure comprises 557 residues: D-arabinono-1,4-lactone oxidase (557 aa).

The FAD-binding PCMH-type domain occupies 26–209; sequence FFCKPQAIFQ…THVTLRTIPK (184 aa). H63 carries the pros-8alpha-FAD histidine modification.

The protein belongs to the oxygen-dependent FAD-linked oxidoreductase family. It depends on FAD as a cofactor.

Its subcellular location is the mitochondrion membrane. It carries out the reaction D-arabinono-1,4-lactone + O2 = dehydro-D-arabinono-1,4-lactone + H2O2 + H(+). It participates in cofactor biosynthesis; D-erythroascorbate biosynthesis; dehydro-D-arabinono-1,4-lactone from D-arabinose: step 2/2. In Debaryomyces hansenii (strain ATCC 36239 / CBS 767 / BCRC 21394 / JCM 1990 / NBRC 0083 / IGC 2968) (Yeast), this protein is D-arabinono-1,4-lactone oxidase (ALO1).